The chain runs to 100 residues: uncharacterized protein (100 aa).

Residues 13-32 traverse the membrane as a helical segment; that stretch reads IWSSLNIICLMVTFLNVQLS.

The protein resides in the mitochondrion membrane. This is an uncharacterized protein from Schizosaccharomyces pombe (strain 972 / ATCC 24843) (Fission yeast).